We begin with the raw amino-acid sequence, 401 residues long: Exodeoxyribonuclease 7 large subunit (401 aa).

It belongs to the XseA family. As to quaternary structure, heterooligomer composed of large and small subunits.

The protein localises to the cytoplasm. The enzyme catalyses Exonucleolytic cleavage in either 5'- to 3'- or 3'- to 5'-direction to yield nucleoside 5'-phosphates.. Functionally, bidirectionally degrades single-stranded DNA into large acid-insoluble oligonucleotides, which are then degraded further into small acid-soluble oligonucleotides. This chain is Exodeoxyribonuclease 7 large subunit, found in Clostridioides difficile (strain 630) (Peptoclostridium difficile).